A 258-amino-acid chain; its full sequence is MKIAILYREEKEKEGVLLKEKLSREHEVVSFHEASASNVVDADLIVVVGGDGTMLRAARKAADGTPLVGFKAGRLGFLTSYTLEEVDQFLEDLRKGNFREELRWFIRVESDIGSHLALNDATLERDLSGKMVEIEVNVEHHSSMWFFADGVVVASPTGSTAYSLSIGGPIIFPECEVLEISPIAPQFFLTRSVVIPSSFKVTVECQREINLLIDGTMVGKTRRVIVQKAEKYVKILRPIKYDYVAVIREKLGYGRRIE.

Catalysis depends on D51, which acts as the Proton acceptor. NAD(+) is bound by residues 51–52, R56, 119–120, K130, D149, 160–165, and A184; these read DG, ND, and TAYSLS.

Belongs to the NAD kinase family. The cofactor is a divalent metal cation.

It is found in the cytoplasm. It catalyses the reaction NAD(+) + ATP = ADP + NADP(+) + H(+). Functionally, involved in the regulation of the intracellular balance of NAD and NADP, and is a key enzyme in the biosynthesis of NADP. Catalyzes specifically the phosphorylation on 2'-hydroxyl of the adenosine moiety of NAD to yield NADP. The polypeptide is NAD kinase (Thermotoga neapolitana (strain ATCC 49049 / DSM 4359 / NBRC 107923 / NS-E)).